The chain runs to 467 residues: Fumarate hydratase class II (467 aa).

Residues 98-100, R126, 129-132, 139-141, and T187 contribute to the substrate site; these read SGT, HPND, and SSN. H188 serves as the catalytic Proton donor/acceptor. S318 is an active-site residue. Substrate contacts are provided by residues S319 and 324-326; that span reads KVN.

This sequence belongs to the class-II fumarase/aspartase family. Fumarase subfamily. As to quaternary structure, homotetramer.

It localises to the cytoplasm. It catalyses the reaction (S)-malate = fumarate + H2O. The protein operates within carbohydrate metabolism; tricarboxylic acid cycle; (S)-malate from fumarate: step 1/1. Its function is as follows. Involved in the TCA cycle. Catalyzes the stereospecific interconversion of fumarate to L-malate. This is Fumarate hydratase class II from Salmonella typhimurium (strain LT2 / SGSC1412 / ATCC 700720).